The chain runs to 398 residues: Delta-aminolevulinic acid dehydratase, chloroplastic (398 aa).

The tract at residues V48–S87 is disordered. Residues E50 to A59 are compositionally biased toward pro residues. Positions S60–S69 are enriched in low complexity. Residues R74–P83 are compositionally biased toward basic residues. The active-site Schiff-base intermediate with substrate is the K266. Residues R276 and K288 each contribute to the 5-aminolevulinate site. E304 provides a ligand contact to Mg(2+). K319 acts as the Schiff-base intermediate with substrate in catalysis. The 5-aminolevulinate site is built by S345 and Y384.

This sequence belongs to the ALAD family. In terms of assembly, homooctamer; formed by oligomerization of dimers. Probably also forms lower oligomers. Mg(2+) is required as a cofactor.

The protein resides in the plastid. The protein localises to the chloroplast. The enzyme catalyses 2 5-aminolevulinate = porphobilinogen + 2 H2O + H(+). It functions in the pathway porphyrin-containing compound metabolism; protoporphyrin-IX biosynthesis; coproporphyrinogen-III from 5-aminolevulinate: step 1/4. Activated by magnesium. Inhibited by succinyl acetone. Enzyme activity may depend on the oligomerization state, where the fully active octamer may dissociate and reassemble into less active lower oligomers. Catalyzes an early step in the biosynthesis of tetrapyrroles. Binds two molecules of 5-aminolevulinate per subunit, each at a distinct site, and catalyzes their condensation to form porphobilinogen. This is Delta-aminolevulinic acid dehydratase, chloroplastic (HEMB) from Pisum sativum (Garden pea).